Consider the following 181-residue polypeptide: Diphosphoinositol polyphosphate phosphohydrolase NUDT4B (181 aa).

Substrate is bound by residues Arg10, 18 to 20 (KKR), and 39 to 41 (SSR). Positions 18-145 (KKRAACLCFR…VHAEYLEKLK (128 aa)) constitute a Nudix hydrolase domain. Mg(2+) contacts are provided by Gly50 and Glu66. Residues 51-72 (GGMEPEEEPGGAAVREVYEEAG) carry the Nudix box motif. The active-site Proton acceptor is Glu69. Glu70 contacts Mg(2+). Residues 90–92 (RKH), Arg116, and Lys134 contribute to the substrate site.

It belongs to the Nudix hydrolase family. DIPP subfamily. Mg(2+) serves as cofactor. It depends on Mn(2+) as a cofactor.

It is found in the cytoplasm. It carries out the reaction diphospho-myo-inositol polyphosphate + H2O = myo-inositol polyphosphate + phosphate.. Cleaves a beta-phosphate from the diphosphate groups in PP-InsP5 (diphosphoinositol pentakisphosphate), PP-InsP4 and [PP]2-InsP4 (bisdiphosphoinositol tetrakisphosphate), suggesting that it may play a role in signal transduction. Also able to catalyze the hydrolysis of dinucleoside oligophosphate Ap6A, but not Ap5A. The major reaction products are ADP and p4a from Ap6A. Also able to hydrolyze 5-phosphoribose 1-diphosphate. Does not play a role in U8 snoRNA decapping activity. Binds U8 snoRNA. This Homo sapiens (Human) protein is Diphosphoinositol polyphosphate phosphohydrolase NUDT4B.